The sequence spans 231 residues: Achaete-scute homolog 1 (231 aa).

Disordered regions lie at residues 1-24 and 39-92; these read MESS…FLPP and AAAA…PELM. The span at 39 to 51 shows a compositional bias: low complexity; it reads AAAAAQSAQQQQP. The segment covering 76-85 has biased composition (basic residues); that stretch reads SAAKQVKRQR. The bHLH domain maps to 113–165; it reads AAVARRNERERNRVKLVNLGFATLREHVPNGAANKKMSKVETLRSAVEYIRAL. Lysine 151 carries the N6-acetyllysine modification.

Efficient DNA binding requires dimerization with another bHLH protein. Forms a heterodimer with TCF3. In terms of tissue distribution, developing CNS and PNS at embryonic and postnatal stages. Expressed in the epithelium of glandular stomach.

Its subcellular location is the nucleus. Transcription factor that plays a key role in neuronal differentiation: acts as a pioneer transcription factor, accessing closed chromatin to allow other factors to bind and activate neural pathways. Directly binds the E box motif (5'-CANNTG-3') on promoters and promotes transcription of neuronal genes. The combination of three transcription factors, ASCL1, POU3F2/BRN2 and MYT1L, is sufficient to reprogram fibroblasts and other somatic cells into induced neuronal (iN) cells in vitro. Plays a role at early stages of development of specific neural lineages in most regions of the CNS, and of several lineages in the PNS. Essential for the generation of olfactory and autonomic neurons. Acts synergistically with FOXN4 to specify the identity of V2b neurons rather than V2a from bipotential p2 progenitors during spinal cord neurogenesis, probably through DLL4-NOTCH signaling activation. Involved in the regulation of neuroendocrine cell development in the glandular stomach. The chain is Achaete-scute homolog 1 from Mus musculus (Mouse).